Reading from the N-terminus, the 302-residue chain is Stanniocalcin-2 (302 aa).

A signal peptide spans 1-24 (MCAERLGQFMTLALVLATFDPARG). The disordered stretch occupies residues 23 to 44 (RGTDATNPPEGPQDRSSQQKGR). N-linked (GlcNAc...) asparagine glycosylation occurs at Asn-73. A disordered region spans residues 217–302 (KPPTAPPERQ…EQSEYSDIRR (86 aa)). The segment covering 227–264 (PQVDRTKLSRAHHGEAGHHLPEPSSRETGRGAKGERGS) has biased composition (basic and acidic residues). A phosphoserine; by FAM20C mark is found at Ser-250 and Ser-251. Thr-254 is subject to Phosphothreonine; by FAM20C.

It belongs to the stanniocalcin family. Homodimer; disulfide-linked. In terms of tissue distribution, expressed in a variety of tissues including muscle, heart, pancreas, kidney, spleen, prostate, small intestine, colon and peripheral blood leukocytes.

The protein localises to the secreted. Its function is as follows. Has an anti-hypocalcemic action on calcium and phosphate homeostasis. This chain is Stanniocalcin-2 (STC2), found in Homo sapiens (Human).